Reading from the N-terminus, the 355-residue chain is uncharacterized protein (355 aa).

Gly132–Thr139 provides a ligand contact to ATP.

It belongs to the AAA ATPase family.

Its subcellular location is the mitochondrion. This is an uncharacterized protein from Schizosaccharomyces pombe (strain 972 / ATCC 24843) (Fission yeast).